The primary structure comprises 48 residues: U-reduvitoxin-Pr5a (48 aa).

The first 19 residues, 1–19 (MRLFLIFTFIVASLASVYG), serve as a signal peptide directing secretion. 3 cysteine pairs are disulfide-bonded: Cys20-Cys34, Cys27-Cys39, and Cys33-Cys44.

This sequence belongs to the venom Ptu1-like knottin family. In terms of tissue distribution, expressed by the venom gland.

Its subcellular location is the secreted. Functionally, binds reversibly and blocks P/Q-type voltage-gated calcium channels (Cav). This chain is U-reduvitoxin-Pr5a, found in Platymeris rhadamanthus (Red spot assassin bug).